The chain runs to 604 residues: Protein CBFA2T1 (604 aa).

Residues 32 to 114 (TEKHSTMPDS…SSSSLANQQL (83 aa)) are disordered. Phosphoserine is present on S41. The segment covering 63-86 (QGAPRTSSFTPTTLTNGTSHSPTA) has biased composition (polar residues). Residues 95-114 (NGFSNGPSSSSSSSLANQQL) show a composition bias toward low complexity. Residues 120-215 (ARQLSKLKRF…NPAQYLAQHE (96 aa)) form the TAFH domain. A disordered region spans residues 230-298 (SELLLDVNEN…LPHPTPPPPQ (69 aa)). A compositionally biased stretch (basic and acidic residues) spans 238 to 264 (ENGKRRTPDRTKENGFDREPLHSEHPS). The span at 271-285 (SPGQRYSPNNGLSYQ) shows a compositional bias: polar residues. Positions 289-298 (LPHPTPPPPQ) are enriched in pro residues. The segment at 337-383 (QEEMIDHRLTDREWAEEWKHLDHLLNCIMDMVEKTRRSLTVLRRCQE) is important for oligomerization. A nervy homology region 2 (NHR2) region spans residues 337–383 (QEEMIDHRLTDREWAEEWKHLDHLLNCIMDMVEKTRRSLTVLRRCQE). The tract at residues 401-423 (DLKKGGGSSSSHSRQQSPVNPDP) is disordered. S417 bears the Phosphoserine mark. The interval 443–492 (EEIWKKAEEAVNEVKRQAMTELQKAVSEAERKAHDMITTERAKMERTVAE) is nervy homology region 3 (NHR3). Zn(2+) contacts are provided by C515, C518, C526, C529, C535, C539, H547, and C551. The MYND-type zinc-finger motif lies at 515-551 (CWNCGRKASETCSGCNTARYCGSFCQHKDWEKHHHIC). The segment covering 557–576 (AQQQGDTPAVSSSVTPNSGA) has biased composition (polar residues). The tract at residues 557–604 (AQQQGDTPAVSSSVTPNSGAGSPMDTPPAATPRSTTPGTPSTIETTPR) is disordered. Positions 587–604 (TPRSTTPGTPSTIETTPR) are enriched in low complexity.

This sequence belongs to the CBFA2T family. Homooligomer. Homotetramerization is mediated by nervy homology region 2 (NRH2). Can interact with CBFA2T2 and CBFA2T3; heterotetramerization between members of the CBFA2T family is proposed. Interacts with TCF12, SIN3A, HDAC1, HDAC2, HDAC3, NCOR1, NCOR2. Interacts with ATN1 (via its N-terminus); the interaction enhances the transcriptional repression. Interacts (via its N-terminus) with ZBTB16; the interaction increases the transcription repression activity of ZBTB16. AML1-MTG8/ETO fusion protein interacts with CBFB. AML1-MTG8/ETO is part of a stable transcription factor complex AETFC in leukemic cells; AETFC formation seems to be involved in recruitment of EP300. AML1-MTG8/ETO nervy homology region 2-mediated oligomerization is proposed to be homotypic, required for AML1-MTG8/ETO-mediated transformation of primary hematopoietic cells and is required for AML1-MTG8/ETO interaction with TCF12. In terms of tissue distribution, most abundantly expressed in brain. Lower levels in lung, heart, testis and ovary.

It is found in the nucleus. Its function is as follows. Transcriptional corepressor which facilitates transcriptional repression via its association with DNA-binding transcription factors and recruitment of other corepressors and histone-modifying enzymes. Can repress the expression of MMP7 in a ZBTB33-dependent manner. Can repress transactivation mediated by TCF12. Acts as a negative regulator of adipogenesis. The AML1-MTG8/ETO fusion protein frequently found in leukemic cells is involved in leukemogenesis and contributes to hematopoietic stem/progenitor cell self-renewal. This chain is Protein CBFA2T1 (RUNX1T1), found in Homo sapiens (Human).